We begin with the raw amino-acid sequence, 248 residues long: MTEANRILLGVNIDHVATLRQARGTRYPDPVKAALDAEEAGADGITVHLREDRRHIQDRDVRVLADVLQTRMNFEMGVTDFMLGFAEQIRPAHVCLVPETRQELTTEGGLDVAGQEARIAAAVERLTLAGCEVSLFIDAEERQIEAAMRVGAPAIELHTGRYADAHTAEEAAQELSRIRDGVICGLNHGLIVNAGHGLHYHNAEAVAAIPGINELNIGHAIVAHALFVGFKQAVAEMKALIVAAAYRG.

Asparagine 12 contributes to the 3-amino-2-oxopropyl phosphate binding site. 1-deoxy-D-xylulose 5-phosphate is bound at residue aspartate 14 to histidine 15. Residue arginine 23 coordinates 3-amino-2-oxopropyl phosphate. Catalysis depends on histidine 48, which acts as the Proton acceptor. Residues arginine 50 and histidine 55 each contribute to the 1-deoxy-D-xylulose 5-phosphate site. The Proton acceptor role is filled by glutamate 75. Threonine 105 contacts 1-deoxy-D-xylulose 5-phosphate. The active-site Proton donor is the histidine 196. Residues glycine 197 and glycine 218 to histidine 219 each bind 3-amino-2-oxopropyl phosphate.

This sequence belongs to the PNP synthase family. Homooctamer; tetramer of dimers.

It is found in the cytoplasm. The catalysed reaction is 3-amino-2-oxopropyl phosphate + 1-deoxy-D-xylulose 5-phosphate = pyridoxine 5'-phosphate + phosphate + 2 H2O + H(+). The protein operates within cofactor biosynthesis; pyridoxine 5'-phosphate biosynthesis; pyridoxine 5'-phosphate from D-erythrose 4-phosphate: step 5/5. Catalyzes the complicated ring closure reaction between the two acyclic compounds 1-deoxy-D-xylulose-5-phosphate (DXP) and 3-amino-2-oxopropyl phosphate (1-amino-acetone-3-phosphate or AAP) to form pyridoxine 5'-phosphate (PNP) and inorganic phosphate. The protein is Pyridoxine 5'-phosphate synthase of Ectopseudomonas mendocina (strain ymp) (Pseudomonas mendocina).